A 133-amino-acid polypeptide reads, in one-letter code: uncharacterized protein (133 aa).

Residues 9–128 (RILVYSDNVQ…VLGRTVLSLL (120 aa)) enclose the Response regulatory domain. Residue aspartate 64 is modified to 4-aspartylphosphate.

This is an uncharacterized protein from Mycobacterium tuberculosis (strain CDC 1551 / Oshkosh).